Consider the following 311-residue polypeptide: Ferrochelatase (311 aa).

Positions 179 and 260 each coordinate Fe cation.

Belongs to the ferrochelatase family.

The protein localises to the cytoplasm. The enzyme catalyses heme b + 2 H(+) = protoporphyrin IX + Fe(2+). It participates in porphyrin-containing compound metabolism; protoheme biosynthesis; protoheme from protoporphyrin-IX: step 1/1. Its function is as follows. Catalyzes the ferrous insertion into protoporphyrin IX. This chain is Ferrochelatase, found in Helicobacter hepaticus (strain ATCC 51449 / 3B1).